The following is a 152-amino-acid chain: Ribosome maturation factor RimP (152 aa).

The protein belongs to the RimP family.

It localises to the cytoplasm. Its function is as follows. Required for maturation of 30S ribosomal subunits. The sequence is that of Ribosome maturation factor RimP from Pseudothermotoga lettingae (strain ATCC BAA-301 / DSM 14385 / NBRC 107922 / TMO) (Thermotoga lettingae).